The following is a 627-amino-acid chain: Phosphomethylpyrimidine synthase (627 aa).

Positions 1 to 24 (MSATQKNNITRLEQLDRQSTQPFP) are enriched in polar residues. A disordered region spans residues 1–29 (MSATQKNNITRLEQLDRQSTQPFPNSRKV). Substrate contacts are provided by residues Asn231, Met260, Tyr289, His325, 345–347 (SRG), 386–389 (DGLR), and Glu425. His429 contacts Zn(2+). Tyr452 serves as a coordination point for substrate. His493 provides a ligand contact to Zn(2+). [4Fe-4S] cluster is bound by residues Cys573, Cys576, and Cys581.

Belongs to the ThiC family. Homodimer. It depends on [4Fe-4S] cluster as a cofactor.

The catalysed reaction is 5-amino-1-(5-phospho-beta-D-ribosyl)imidazole + S-adenosyl-L-methionine = 4-amino-2-methyl-5-(phosphooxymethyl)pyrimidine + CO + 5'-deoxyadenosine + formate + L-methionine + 3 H(+). Its pathway is cofactor biosynthesis; thiamine diphosphate biosynthesis. Functionally, catalyzes the synthesis of the hydroxymethylpyrimidine phosphate (HMP-P) moiety of thiamine from aminoimidazole ribotide (AIR) in a radical S-adenosyl-L-methionine (SAM)-dependent reaction. The protein is Phosphomethylpyrimidine synthase of Pseudomonas aeruginosa (strain UCBPP-PA14).